A 119-amino-acid chain; its full sequence is Ribonuclease P protein component (119 aa).

It belongs to the RnpA family. In terms of assembly, consists of a catalytic RNA component (M1 or rnpB) and a protein subunit.

The enzyme catalyses Endonucleolytic cleavage of RNA, removing 5'-extranucleotides from tRNA precursor.. Its function is as follows. RNaseP catalyzes the removal of the 5'-leader sequence from pre-tRNA to produce the mature 5'-terminus. It can also cleave other RNA substrates such as 4.5S RNA. The protein component plays an auxiliary but essential role in vivo by binding to the 5'-leader sequence and broadening the substrate specificity of the ribozyme. In Escherichia fergusonii (strain ATCC 35469 / DSM 13698 / CCUG 18766 / IAM 14443 / JCM 21226 / LMG 7866 / NBRC 102419 / NCTC 12128 / CDC 0568-73), this protein is Ribonuclease P protein component.